The following is a 461-amino-acid chain: Ornithine decarboxylase (461 aa).

N6-(pyridoxal phosphate)lysine is present on Lys-69. Residues Ser-200, Gly-237, and 274–277 contribute to the pyridoxal 5'-phosphate site; that span reads EPGR. Ser-303 is subject to Phosphoserine; by CK2. 331–332 serves as a coordination point for substrate; the sequence is YD. Cys-360 (proton donor; shared with dimeric partner) is an active-site residue. An S-nitrosocysteine modification is found at Cys-360. Residue Asp-361 participates in substrate binding. Tyr-389 contacts pyridoxal 5'-phosphate.

It belongs to the Orn/Lys/Arg decarboxylase class-II family. Homodimer. Only the dimer is catalytically active, as the active sites are constructed of residues from both monomers. It depends on pyridoxal 5'-phosphate as a cofactor.

The enzyme catalyses L-ornithine + H(+) = putrescine + CO2. Its pathway is amine and polyamine biosynthesis; putrescine biosynthesis via L-ornithine pathway; putrescine from L-ornithine: step 1/1. With respect to regulation, inhibited by antizymes (AZs) OAZ1, OAZ2 and OAZ3 in response to polyamine levels. AZs inhibit the assembly of the functional homodimer by binding to ODC monomers. Additionally, OAZ1 targets ODC monomers for ubiquitin-independent proteolytic destruction by the 26S proteasome. Functionally, catalyzes the first and rate-limiting step of polyamine biosynthesis that converts ornithine into putrescine, which is the precursor for the polyamines, spermidine and spermine. Polyamines are essential for cell proliferation and are implicated in cellular processes, ranging from DNA replication to apoptosis. This chain is Ornithine decarboxylase (Odc1), found in Mus pahari (Gairdner's shrew-mouse).